The chain runs to 1058 residues: MPKRKDIQKIMVIGSGPIIIGQAAEFDYAGTQACLALKEEGYKVILVNSNPATIMTDKEIADKVYIEPLTLEFVNRIIRKERPDAILPTLGGQTGLNMAMALSKAGILDDLEIELLGTKLSAIDQAEDRDLFKQLMQELDQPIPESTIVKTVDEAVTFARDIGYPVIVRPAFTLGGTGGGICSSEEELCEITENGLKLSPVTQCLIERSIAGFKEIEYEVMRDSADNALVVCNMENFDPVGIHTGDSIVFAPTQTLSDIENQMLRDASLKIIRALKIEGGCNVQLALDPYSFKYYVIEVNPRVSRSSALASKATGYPIAKLAAKIAVGLTLDEMINPITGTTYAMFEPALDYVVAKIPRFPFDKFEHGERQLGTQMKATGEVMAIGRNLEESLLKACRSLEIGVCHNEMTSLSNISDEELVTKVIKAQDDRLFYLSEAIRRGYSIEELESLTKIDLFFLDKLLHIVEIEQELQMHVDHLESLKKAKRYGFSDQKIAEIWQKDESDIRAMRHSHSLYPVYKMVDTCAAEFDAKTPYFYSTYELENESVQSNKESILVLGSGPIRIGQGVEFDYATVHSVKAIQKAGYEAIIMNSNPETVSTDFSVSDKLYFEPLTFEDVMNVIDLEQPKGVIVQFGGQTAINLAQSLSDAGVTILGTQVEDLDRAEDRDLFEKALKELGIPQPQGQTATNEEEALEAAKKIGFPVLVRPSYVLGGRAMEIVENKEDLREYIRTAVKASPEHPILVDSYIFGKECEVDAISDGKSVLIPGIMEHIERAGVHSGDSMAVYPPQQLSKQIQETIAEYTKRLAIGLNCIGMMNVQFVIKNEQVYVIEVNPRASRTVPFLSKVTGIPMAQIATKLILGQTLKDLGYEDGLYPQSQLVHIKAPVFSFTKLAQVDSLLGPEMKSTGEVMGSDTSLEKALYKAFEANNSHLSEFGQIVFTIADDSKAEALSLARRFKAIGYQIMATQGTAAYFAEQGLSACLVGKIGDAANDIPTLVRHGHVQAIVNTVGIKRTADKDGQMIRSSAIEQGVPLFTALDTAKAMLTVLESRCFNIEAI.

The tract at residues 1-401 (MPKRKDIQKI…SLLKACRSLE (401 aa)) is carboxyphosphate synthetic domain. ATP contacts are provided by Arg-129, Arg-169, Gly-175, Gly-176, Arg-208, Ile-210, Glu-215, Gly-241, Ile-242, His-243, Gln-284, and Glu-298. Positions 133–327 (KQLMQELDQP…IAKLAAKIAV (195 aa)) constitute an ATP-grasp 1 domain. Mg(2+) contacts are provided by Gln-284, Glu-298, and Asn-300. Positions 284, 298, and 300 each coordinate Mn(2+). The tract at residues 402–546 (IGVCHNEMTS…YSTYELENES (145 aa)) is oligomerization domain. The segment at 547 to 929 (VQSNKESILV…ALYKAFEANN (383 aa)) is carbamoyl phosphate synthetic domain. One can recognise an ATP-grasp 2 domain in the interval 671–861 (EKALKELGIP…MAQIATKLIL (191 aa)). ATP-binding residues include Arg-707, Ser-746, Ile-748, Glu-752, Gly-777, Val-778, His-779, Ser-780, Gln-820, and Glu-832. The Mg(2+) site is built by Gln-820, Glu-832, and Asn-834. Residues Gln-820, Glu-832, and Asn-834 each coordinate Mn(2+). Residues 930–1058 (SHLSEFGQIV…ESRCFNIEAI (129 aa)) enclose the MGS-like domain. The interval 930-1058 (SHLSEFGQIV…ESRCFNIEAI (129 aa)) is allosteric domain.

It belongs to the CarB family. In terms of assembly, composed of two chains; the small (or glutamine) chain promotes the hydrolysis of glutamine to ammonia, which is used by the large (or ammonia) chain to synthesize carbamoyl phosphate. Tetramer of heterodimers (alpha,beta)4. It depends on Mg(2+) as a cofactor. Mn(2+) is required as a cofactor.

The catalysed reaction is hydrogencarbonate + L-glutamine + 2 ATP + H2O = carbamoyl phosphate + L-glutamate + 2 ADP + phosphate + 2 H(+). It catalyses the reaction hydrogencarbonate + NH4(+) + 2 ATP = carbamoyl phosphate + 2 ADP + phosphate + 2 H(+). It functions in the pathway amino-acid biosynthesis; L-arginine biosynthesis; carbamoyl phosphate from bicarbonate: step 1/1. The protein operates within pyrimidine metabolism; UMP biosynthesis via de novo pathway; (S)-dihydroorotate from bicarbonate: step 1/3. Functionally, large subunit of the glutamine-dependent carbamoyl phosphate synthetase (CPSase). CPSase catalyzes the formation of carbamoyl phosphate from the ammonia moiety of glutamine, carbonate, and phosphate donated by ATP, constituting the first step of 2 biosynthetic pathways, one leading to arginine and/or urea and the other to pyrimidine nucleotides. The large subunit (synthetase) binds the substrates ammonia (free or transferred from glutamine from the small subunit), hydrogencarbonate and ATP and carries out an ATP-coupled ligase reaction, activating hydrogencarbonate by forming carboxy phosphate which reacts with ammonia to form carbamoyl phosphate. The chain is Carbamoyl phosphate synthase large chain from Streptococcus pyogenes serotype M6 (strain ATCC BAA-946 / MGAS10394).